Here is a 329-residue protein sequence, read N- to C-terminus: GTP 3',8-cyclase (329 aa).

Residues Met1–Ala229 form the Radical SAM core domain. Residue Arg8 coordinates GTP. Residues Cys15 and Cys19 each coordinate [4Fe-4S] cluster. Tyr21 is a binding site for S-adenosyl-L-methionine. Residue Cys22 participates in [4Fe-4S] cluster binding. Arg60 lines the GTP pocket. S-adenosyl-L-methionine is bound at residue Gly64. A GTP-binding site is contributed by Thr91. Position 115 (Ser115) interacts with S-adenosyl-L-methionine. Lys155 is a GTP binding site. Met189 is an S-adenosyl-L-methionine binding site. The [4Fe-4S] cluster site is built by Cys252 and Cys255. Position 257–259 (Arg257–Arg259) interacts with GTP. Position 269 (Cys269) interacts with [4Fe-4S] cluster.

This sequence belongs to the radical SAM superfamily. MoaA family. As to quaternary structure, monomer and homodimer. [4Fe-4S] cluster is required as a cofactor.

It carries out the reaction GTP + AH2 + S-adenosyl-L-methionine = (8S)-3',8-cyclo-7,8-dihydroguanosine 5'-triphosphate + 5'-deoxyadenosine + L-methionine + A + H(+). It participates in cofactor biosynthesis; molybdopterin biosynthesis. Catalyzes the cyclization of GTP to (8S)-3',8-cyclo-7,8-dihydroguanosine 5'-triphosphate. This is GTP 3',8-cyclase from Rippkaea orientalis (strain PCC 8801 / RF-1) (Cyanothece sp. (strain PCC 8801)).